The sequence spans 325 residues: MAAAMAEQEGSKGSARNRGGVQRVEGKLRASVEKGDYYEAHQMYRTLFFRYMSQSKHIEARELMYSGALLFFSHSQRNSAADLSMLVLESLEKHEVKVTEELLENLAKLFSLMDPNSPERVAFVSRALKWSTGGSGKFGDPKLHQFLAITLWKEQNYYESRYHFLHSSDGEGCANMLVEYSSSRGYRSEVDMFVVQAVLQFLCLKNKTSASVVFTTYTQKHPSIERGPPFVQPLLNFIWFLLLAVEGGKLTVFTVLCEQYQPSLKRDPMYNEYLDRIGQLFFGLPPKQSSSYGGLLGNLLNSLMGSGEDDDVEDGQEDSSPIELD.

2 disordered regions span residues 1–22 (MAAA…GGVQ) and 306–325 (SGED…IELD). Residues 307 to 317 (GEDDDVEDGQE) show a composition bias toward acidic residues.

The protein belongs to the GET4 family. Component of the bag6/bat3 complex.

The protein resides in the cytoplasm. Its subcellular location is the cytosol. As part of a cytosolic protein quality control complex, the bag6/bat3 complex, maintains misfolded and hydrophobic patches-containing proteins in a soluble state and participates in their proper delivery to the endoplasmic reticulum or alternatively can promote their sorting to the proteasome where they undergo degradation. The bag6/bat3 complex is involved in the post-translational delivery of tail-anchored/type II transmembrane proteins to the endoplasmic reticulum membrane. Similarly, the bag6/bat3 complex also functions as a sorting platform for proteins of the secretory pathway that are mislocalized to the cytosol either delivering them to the proteasome for degradation or to the endoplasmic reticulum. The bag6/bat3 complex also plays a role in the endoplasmic reticulum-associated degradation (ERAD), a quality control mechanism that eliminates unwanted proteins of the endoplasmic reticulum through their retrotranslocation to the cytosol and their targeting to the proteasome. It maintains these retrotranslocated proteins in an unfolded yet soluble state condition in the cytosol to ensure their proper delivery to the proteasome. This is Golgi to ER traffic protein 4 homolog B (get4-b) from Xenopus laevis (African clawed frog).